The following is a 157-amino-acid chain: Protein FAM219A (157 aa).

The residue at position 1 (methionine 1) is an N-acetylmethionine. Positions 1–103 (MMEEIDRFQD…SRYSSSGYSS (103 aa)) are disordered. Over residues 17–33 (SDRDCDAREEKQRELAR) the composition is skewed to basic and acidic residues. Polar residues predominate over residues 38-52 (KNGSMGSPVNQQPKK). Serine 44 and serine 74 each carry phosphoserine. Threonine 85 is modified (phosphothreonine). Serine 87 and serine 94 each carry phosphoserine. The span at 94–103 (SRYSSSGYSS) shows a compositional bias: low complexity.

Belongs to the FAM219 family.

The chain is Protein FAM219A (Fam219a) from Mus musculus (Mouse).